The primary structure comprises 726 residues: Catalase-peroxidase (726 aa).

The tryptophyl-tyrosyl-methioninium (Trp-Tyr) (with M-250) cross-link spans 96-224 (WHSAGTYRIA…LAAVMMGLIY (129 aa)). His-97 acts as the Proton acceptor in catalysis. The segment at residues 224–250 (YVNPEGVDGKPDPLKTAHDMRVTFARM) is a cross-link (tryptophyl-tyrosyl-methioninium (Tyr-Met) (with W-96)). A heme b-binding site is contributed by His-265.

Belongs to the peroxidase family. Peroxidase/catalase subfamily. In terms of assembly, homodimer or homotetramer. Requires heme b as cofactor. In terms of processing, formation of the three residue Trp-Tyr-Met cross-link is important for the catalase, but not the peroxidase activity of the enzyme.

The catalysed reaction is H2O2 + AH2 = A + 2 H2O. It carries out the reaction 2 H2O2 = O2 + 2 H2O. In terms of biological role, bifunctional enzyme with both catalase and broad-spectrum peroxidase activity. The protein is Catalase-peroxidase of Vibrio campbellii (strain ATCC BAA-1116).